The chain runs to 465 residues: Putative F-box/LRR-repeat protein At3g28410 (465 aa).

The F-box domain occupies 27–73 (ADFINYMPDDILHHILSFIPTDLAMRTSVLSRRWRHVWCETPCLDIK). LRR repeat units lie at residues 127-155 (VRDF…DVTL), 178-203 (FCQI…TLDT), 207-225 (LERL…DINR), 278-302 (ADRY…TVGE), 332-357 (FVRS…TLHT), 402-427 (TSKL…VVWL), and 447-465 (VETL…QSNC).

The chain is Putative F-box/LRR-repeat protein At3g28410 from Arabidopsis thaliana (Mouse-ear cress).